A 704-amino-acid chain; its full sequence is Elongation factor G (704 aa).

The tr-type G domain occupies 10-290 (NKVRNIGIMA…AVVDFLPNPL (281 aa)). Residues 19-26 (AHIDAGKT), 83-87 (DTPGH), and 137-140 (NKMD) each bind GTP.

The protein belongs to the TRAFAC class translation factor GTPase superfamily. Classic translation factor GTPase family. EF-G/EF-2 subfamily.

Its subcellular location is the cytoplasm. Catalyzes the GTP-dependent ribosomal translocation step during translation elongation. During this step, the ribosome changes from the pre-translocational (PRE) to the post-translocational (POST) state as the newly formed A-site-bound peptidyl-tRNA and P-site-bound deacylated tRNA move to the P and E sites, respectively. Catalyzes the coordinated movement of the two tRNA molecules, the mRNA and conformational changes in the ribosome. This is Elongation factor G from Paenarthrobacter aurescens (strain TC1).